Consider the following 32-residue polypeptide: Ranatuerin-2Lb (32 aa).

C27 and C32 are joined by a disulfide.

Expressed by the skin glands.

The protein localises to the secreted. Antibacterial activity against Gram-positive bacterium S.aureus and Gram-negative bacterium E.coli. Has activity against C.albicans. This Rana luteiventris (Columbia spotted frog) protein is Ranatuerin-2Lb.